The primary structure comprises 570 residues: Keratin, type I cytoskeletal 10 (570 aa).

The segment covering 1–16 has biased composition (low complexity); it reads MSVLYSSSSKQFSSSR. The disordered stretch occupies residues 1-29; sequence MSVLYSSSSKQFSSSRSGGGGGGGSVRVS. The segment at 1–143 is head; the sequence is MSVLYSSSSK…GDGGSLLSGN (143 aa). Phosphoserine is present on residues serine 15 and serine 17. Position 32 is an asymmetric dimethylarginine; alternate (arginine 32). At arginine 32 the chain carries Omega-N-methylarginine; alternate. Residues serine 34, serine 45, serine 48, and serine 168 each carry the phosphoserine modification. The segment at 144 to 179 is coil 1A; it reads GRVTMQNLNDRLASYMDKVRALEESNYELEGKIKEW. Residues 144 to 458 form the IF rod domain; that stretch reads GRVTMQNLND…SLLEGEGSSS (315 aa). The segment at 180–200 is linker 1; that stretch reads YEKHGNSSQREPRDYSKYYKT. The tract at residues 201–292 is coil 1B; that stretch reads IEDLKGQILT…KNHEEEMRDL (92 aa). A linker 12 region spans residues 293 to 315; sequence QNVSTGDVNVEMNAAPGVDLTQL. The segment at 316-454 is coil 2; the sequence is LNNMRNQYEQ…QTYRSLLEGE (139 aa). Residues 451–570 form a disordered region; it reads LEGEGSSSGG…GDQSSKGPRY (120 aa). Residues 455 to 570 form a tail region; that stretch reads GSSSGGGGGR…GDQSSKGPRY (116 aa). A compositionally biased stretch (gly residues) spans 456–562; that stretch reads SSSGGGGGRR…GGFKSSGGGD (107 aa).

This sequence belongs to the intermediate filament family. As to quaternary structure, (Microbial infection) Interacts (via C-terminal tail domain) with the S.aureus clumping factor, clfB; this interaction probably mediates S.aureus attachment to the highly keratinized squamous epithelial cells from the nasal cavity. In terms of assembly, heterotetramer of two type I and two type II keratins. Heterodimer with KRT1. Two heterodimers of KRT1 and KRT10 form a heterotetramer. The KRT10 subunit in the heterotetramer is probably disulfide-linked. Interacts with PLEC isoform 1C, when in a heterodimer with KRT1. (Microbial infection) Interacts (via the C-terminal tail domain) with S.pneumoniae serine-rich repeat protein PsrP; this interaction probably mediates S.pneumoniae adherence to lung tissue and subsequent pathogenesis. Expressed in the suprabasal layers of the epidermis throughout the entire sole (at protein level). Expressed in the infundibular regions of the ear, the interscale regions of the tail, and the interfollicular epidermis of the back. Expressed in lung tissue from young mice (at protein level).

The protein resides in the secreted. It localises to the extracellular space. Its subcellular location is the cell surface. It is found in the cytoplasm. In terms of biological role, plays a role in the establishment of the epidermal barrier on plantar skin. Involved in the maintenance of cell layer development and keratin filament bundles in suprabasal cells of the epithelium. Functionally, (Microbial infection) Acts as a mediator of S.aureus adherence to desquamated nasal epithelial cells via clfB, and hence may play a role in nasal colonization. (Microbial infection) Binds S.pneumoniae PsrP, mediating adherence of the bacteria to lung cell lines. This chain is Keratin, type I cytoskeletal 10 (Krt10), found in Mus musculus (Mouse).